The chain runs to 133 residues: Holo-[acyl-carrier-protein] synthase (133 aa).

Residues D8 and E57 each coordinate Mg(2+).

This sequence belongs to the P-Pant transferase superfamily. AcpS family. The cofactor is Mg(2+).

The protein localises to the cytoplasm. It carries out the reaction apo-[ACP] + CoA = holo-[ACP] + adenosine 3',5'-bisphosphate + H(+). In terms of biological role, transfers the 4'-phosphopantetheine moiety from coenzyme A to a Ser of acyl-carrier-protein. In Chelativorans sp. (strain BNC1), this protein is Holo-[acyl-carrier-protein] synthase.